Consider the following 230-residue polypeptide: Lipoprotein-releasing system ATP-binding protein LolD (230 aa).

In terms of domain architecture, ABC transporter spans 10–228; that stretch reads LRAEHLSKVY…QLHMANGRLL (219 aa). 46 to 53 lines the ATP pocket; it reads GASGSGKS.

Belongs to the ABC transporter superfamily. Lipoprotein translocase (TC 3.A.1.125) family. As to quaternary structure, the complex is composed of two ATP-binding proteins (LolD) and two transmembrane proteins (LolC and LolE).

The protein resides in the cell inner membrane. In terms of biological role, part of the ABC transporter complex LolCDE involved in the translocation of mature outer membrane-directed lipoproteins, from the inner membrane to the periplasmic chaperone, LolA. Responsible for the formation of the LolA-lipoprotein complex in an ATP-dependent manner. The chain is Lipoprotein-releasing system ATP-binding protein LolD from Bordetella avium (strain 197N).